Here is a 290-residue protein sequence, read N- to C-terminus: ATP synthase gamma chain (290 aa).

The protein belongs to the ATPase gamma chain family. As to quaternary structure, F-type ATPases have 2 components, CF(1) - the catalytic core - and CF(0) - the membrane proton channel. CF(1) has five subunits: alpha(3), beta(3), gamma(1), delta(1), epsilon(1). CF(0) has three main subunits: a, b and c.

It is found in the cell inner membrane. Its function is as follows. Produces ATP from ADP in the presence of a proton gradient across the membrane. The gamma chain is believed to be important in regulating ATPase activity and the flow of protons through the CF(0) complex. This Bradyrhizobium diazoefficiens (strain JCM 10833 / BCRC 13528 / IAM 13628 / NBRC 14792 / USDA 110) protein is ATP synthase gamma chain.